A 384-amino-acid chain; its full sequence is Probable protein phosphatase 2C 42 (384 aa).

In terms of domain architecture, PPM-type phosphatase spans 58 to 358; the sequence is DFSMAVIQAN…DDITVIVVFL (301 aa). Mn(2+) contacts are provided by aspartate 89, glycine 90, aspartate 290, and aspartate 349.

The protein belongs to the PP2C family. It depends on Mg(2+) as a cofactor. Requires Mn(2+) as cofactor.

The catalysed reaction is O-phospho-L-seryl-[protein] + H2O = L-seryl-[protein] + phosphate. It carries out the reaction O-phospho-L-threonyl-[protein] + H2O = L-threonyl-[protein] + phosphate. Functionally, dephosphorylates and represses plasma membrane H(+)-ATPases (PM H(+)-ATPases, e.g. AHA1 and AHA2), thus influencing negatively plant growth and fitness. Promotes the apical hook maintenance of etiolated seedlings. The sequence is that of Probable protein phosphatase 2C 42 from Arabidopsis thaliana (Mouse-ear cress).